The sequence spans 376 residues: Probable plastid-lipid-associated protein 3, chloroplastic (376 aa).

The N-terminal 53 residues, 1-53 (MATLFTVARPSSLLYVSSINPSKTFSPSISLKLNSLSFSFGYRPKPLRFSKIR), are a transit peptide targeting the chloroplast. Residues 54–146 (SSLPSESESE…EADAGNGSAV (93 aa)) form a disordered region. Polar residues predominate over residues 85–96 (PDSQPDNVTVNV). Positions 117-126 (MESDPPRNED) are enriched in basic and acidic residues.

It belongs to the PAP/fibrillin family.

It localises to the plastid. Its subcellular location is the chloroplast. The protein resides in the plastoglobule. Its function is as follows. Probably involved in light/cold stress-related jasmonate (JA) biosynthesis. This is Probable plastid-lipid-associated protein 3, chloroplastic (PAP3) from Arabidopsis thaliana (Mouse-ear cress).